We begin with the raw amino-acid sequence, 503 residues long: Cobyric acid synthase (503 aa).

In terms of domain architecture, GATase cobBQ-type spans 260–453; the sequence is KIGVAAIYFP…FHALFDESSV (194 aa). C341 (nucleophile) is an active-site residue. The active site involves H445.

Belongs to the CobB/CobQ family. CobQ subfamily.

It participates in cofactor biosynthesis; adenosylcobalamin biosynthesis. Its function is as follows. Catalyzes amidations at positions B, D, E, and G on adenosylcobyrinic A,C-diamide. NH(2) groups are provided by glutamine, and one molecule of ATP is hydrogenolyzed for each amidation. In Pelodictyon phaeoclathratiforme (strain DSM 5477 / BU-1), this protein is Cobyric acid synthase.